The chain runs to 366 residues: Phospho-N-acetylmuramoyl-pentapeptide-transferase (366 aa).

Transmembrane regions (helical) follow at residues 27–47 (AALF…INSL), 71–91 (TPTM…LLWA), 93–113 (LSNV…AIGF), 138–158 (FVIA…SGIA), 174–194 (FMIN…VGAG), 205–225 (GLAI…AYLA), 245–265 (LAVV…FNAP), 268–288 (AIFM…TVAV), 294–314 (IVMA…IIQV), and 343–363 (QVVI…LSTL).

The protein belongs to the glycosyltransferase 4 family. MraY subfamily. Requires Mg(2+) as cofactor.

Its subcellular location is the cell inner membrane. The catalysed reaction is UDP-N-acetyl-alpha-D-muramoyl-L-alanyl-gamma-D-glutamyl-meso-2,6-diaminopimeloyl-D-alanyl-D-alanine + di-trans,octa-cis-undecaprenyl phosphate = di-trans,octa-cis-undecaprenyl diphospho-N-acetyl-alpha-D-muramoyl-L-alanyl-D-glutamyl-meso-2,6-diaminopimeloyl-D-alanyl-D-alanine + UMP. The protein operates within cell wall biogenesis; peptidoglycan biosynthesis. Functionally, catalyzes the initial step of the lipid cycle reactions in the biosynthesis of the cell wall peptidoglycan: transfers peptidoglycan precursor phospho-MurNAc-pentapeptide from UDP-MurNAc-pentapeptide onto the lipid carrier undecaprenyl phosphate, yielding undecaprenyl-pyrophosphoryl-MurNAc-pentapeptide, known as lipid I. This Rhizobium johnstonii (strain DSM 114642 / LMG 32736 / 3841) (Rhizobium leguminosarum bv. viciae) protein is Phospho-N-acetylmuramoyl-pentapeptide-transferase.